The following is a 186-amino-acid chain: Ribosome-recycling factor (186 aa).

It belongs to the RRF family.

The protein localises to the cytoplasm. Functionally, responsible for the release of ribosomes from messenger RNA at the termination of protein biosynthesis. May increase the efficiency of translation by recycling ribosomes from one round of translation to another. This is Ribosome-recycling factor from Phocaeicola vulgatus (strain ATCC 8482 / DSM 1447 / JCM 5826 / CCUG 4940 / NBRC 14291 / NCTC 11154) (Bacteroides vulgatus).